Reading from the N-terminus, the 547-residue chain is CTP synthase (547 aa).

The tract at residues 1 to 265 (MARFVFITGG…DQAVLDAFSI (265 aa)) is amidoligase domain. Ser13 lines the CTP pocket. Ser13 is a binding site for UTP. ATP contacts are provided by residues 14 to 19 (SLGKGL) and Asp71. Mg(2+) contacts are provided by Asp71 and Glu139. Residues 146–148 (DIE), 186–191 (KTKPTQ), and Lys222 contribute to the CTP site. UTP contacts are provided by residues 186-191 (KTKPTQ) and Lys222. The 256-residue stretch at 291–546 (NVAIVGKYTQ…VRAAKEVSRL (256 aa)) folds into the Glutamine amidotransferase type-1 domain. Position 353 (Gly353) interacts with L-glutamine. Cys380 acts as the Nucleophile; for glutamine hydrolysis in catalysis. Residues 381 to 384 (LGMQ), Glu404, and Arg474 contribute to the L-glutamine site. Active-site residues include His519 and Glu521.

The protein belongs to the CTP synthase family. As to quaternary structure, homotetramer.

The catalysed reaction is UTP + L-glutamine + ATP + H2O = CTP + L-glutamate + ADP + phosphate + 2 H(+). The enzyme catalyses L-glutamine + H2O = L-glutamate + NH4(+). It carries out the reaction UTP + NH4(+) + ATP = CTP + ADP + phosphate + 2 H(+). It functions in the pathway pyrimidine metabolism; CTP biosynthesis via de novo pathway; CTP from UDP: step 2/2. With respect to regulation, allosterically activated by GTP, when glutamine is the substrate; GTP has no effect on the reaction when ammonia is the substrate. The allosteric effector GTP functions by stabilizing the protein conformation that binds the tetrahedral intermediate(s) formed during glutamine hydrolysis. Inhibited by the product CTP, via allosteric rather than competitive inhibition. Functionally, catalyzes the ATP-dependent amination of UTP to CTP with either L-glutamine or ammonia as the source of nitrogen. Regulates intracellular CTP levels through interactions with the four ribonucleotide triphosphates. The polypeptide is CTP synthase (Dinoroseobacter shibae (strain DSM 16493 / NCIMB 14021 / DFL 12)).